The sequence spans 376 residues: Actin, macronuclear (376 aa).

This sequence belongs to the actin family.

It localises to the cytoplasm. The protein resides in the cytoskeleton. It catalyses the reaction ATP + H2O = ADP + phosphate + H(+). In terms of biological role, actins are highly conserved proteins that are involved in various types of cell motility and are ubiquitously expressed in all eukaryotic cells. This Tetrahymena thermophila protein is Actin, macronuclear.